The following is a 268-amino-acid chain: Thiazole synthase (268 aa).

The Schiff-base intermediate with DXP role is filled by Lys-108. 1-deoxy-D-xylulose 5-phosphate contacts are provided by residues Gly-169, 195–196, and 217–218; these read AG and NS. A disordered region spans residues 248 to 268; the sequence is RLKENPLASPSSPLEGVISNN. Residues 255 to 268 show a composition bias toward polar residues; sequence ASPSSPLEGVISNN.

The protein belongs to the ThiG family. As to quaternary structure, homotetramer. Forms heterodimers with either ThiH or ThiS.

The protein resides in the cytoplasm. It catalyses the reaction [ThiS sulfur-carrier protein]-C-terminal-Gly-aminoethanethioate + 2-iminoacetate + 1-deoxy-D-xylulose 5-phosphate = [ThiS sulfur-carrier protein]-C-terminal Gly-Gly + 2-[(2R,5Z)-2-carboxy-4-methylthiazol-5(2H)-ylidene]ethyl phosphate + 2 H2O + H(+). It functions in the pathway cofactor biosynthesis; thiamine diphosphate biosynthesis. Functionally, catalyzes the rearrangement of 1-deoxy-D-xylulose 5-phosphate (DXP) to produce the thiazole phosphate moiety of thiamine. Sulfur is provided by the thiocarboxylate moiety of the carrier protein ThiS. In vitro, sulfur can be provided by H(2)S. The polypeptide is Thiazole synthase (Prochlorococcus marinus (strain NATL1A)).